The following is a 197-amino-acid chain: Imidazoleglycerol-phosphate dehydratase (197 aa).

The protein belongs to the imidazoleglycerol-phosphate dehydratase family.

The protein localises to the cytoplasm. It carries out the reaction D-erythro-1-(imidazol-4-yl)glycerol 3-phosphate = 3-(imidazol-4-yl)-2-oxopropyl phosphate + H2O. It participates in amino-acid biosynthesis; L-histidine biosynthesis; L-histidine from 5-phospho-alpha-D-ribose 1-diphosphate: step 6/9. The sequence is that of Imidazoleglycerol-phosphate dehydratase from Methylocella silvestris (strain DSM 15510 / CIP 108128 / LMG 27833 / NCIMB 13906 / BL2).